A 682-amino-acid polypeptide reads, in one-letter code: Zinc finger protein 16 (682 aa).

Residues 1–10 (MPSLRTRREE) show a composition bias toward basic and acidic residues. The segment at 1-38 (MPSLRTRREEAEMELSAPGPSPWTPAAQARVSDAPAVT) is disordered. The necessary for transcription activation stretch occupies residues 62–210 (YQQPDCDTRT…GVPTAESPLI (149 aa)). The segment at 209–231 (LICNECGKTFRGNPDLIQRQIVH) adopts a C2H2-type 1; degenerate zinc-finger fold. The C2H2-type 2; degenerate zinc finger occupies 237–259 (FMCDDCGKTFSQNSVLKNRHRSH). Residue Lys-253 forms a Glycyl lysine isopeptide (Lys-Gly) (interchain with G-Cter in SUMO2) linkage. C2H2-type zinc fingers lie at residues 265–287 (YQCS…QSHH), 293–315 (YTCT…QKSH), 321–343 (YECN…QRIH), 349–371 (YVCS…HRTH), 377–399 (FECG…QRVH), 405–427 (YECN…HRVH), 433–455 (YKCS…RRIH), and 461–483 (HVCN…QIIH). Required for nuclear localization stretches follow at residues 268–393 (SECG…AHLR) and 341–373 (RIHS…THTG). A required for nuclear localization region spans residues 473–503 (SSVLRKHQIIHTGEKPYRCSVCGKAFSHSSA). Lys-487 bears the N6-acetyllysine mark. 7 C2H2-type zinc fingers span residues 489–511 (YRCS…QGVH), 517–539 (YACH…QRVH), 545–567 (YECT…QRIH), 573–595 (HECN…QKVH), 601–623 (YTCV…QIIH), 629–651 (YKCS…QRIH), and 657–679 (YDCA…QLIH).

It belongs to the krueppel C2H2-type zinc-finger protein family. As to quaternary structure, interacts with INCA1; the interaction inhibits INCA1 activity and induces the cell cycle process.

It localises to the nucleus. Functionally, acts as a transcriptional activator. Promotes cell proliferation by facilitating the cell cycle phase transition from the S to G2/M phase. Involved in both the hemin- and phorbol myristate acetate (PMA)-induced erythroid and megakaryocytic differentiation, respectively. Also plays a role as an inhibitor of cell apoptosis. The chain is Zinc finger protein 16 (ZNF16) from Pan troglodytes (Chimpanzee).